We begin with the raw amino-acid sequence, 66 residues long: Large ribosomal subunit protein bL35 (66 aa).

It belongs to the bacterial ribosomal protein bL35 family.

In Acholeplasma laidlawii (strain PG-8A), this protein is Large ribosomal subunit protein bL35.